A 449-amino-acid chain; its full sequence is VIRF-1 (449 aa).

A disordered region spans residues 1–60 (MDPGQRPNPFGAPGAIPKKPCLSQGSPGTSGSGAPCDEPSRSESPGEGPSGTGGSAAAGD). The IRF tryptophan pentad repeat DNA-binding region spans 89 to 195 (KASIKDWIVC…HHFLVFRVRK (107 aa)). An N6-propionyllysine; by host mark is found at Lys406 and Lys442.

The protein belongs to the IRF family. Forms homodimers. Interacts with host IRF3, IRF7, and CREBBP. Interacts with host SYNCRIP. Interacts with host USP7. Interacts (via C-terminus) with host HERC5. Interacts with host GABARAPL1. Interacts with host SIRT6. In terms of processing, ISGylated. Propionylated in lysine residues Lys-406 and Lys-442, which is required for effective inhibition of IFN-beta production and antiviral signaling.

The protein localises to the host cytoplasm. Plays a role in the inhibition of host innate response by repressing the expression of interferon-inducible genes and blocking host IRF1- and IRF3-mediated transcription. Blocks the interaction between host IRF3 and CREBBP. Regulates the host cellular metabolism by increasing glucose uptake, ATP production and lactate secretion through down-regulation of heterogeneous nuclear ribonuclear protein Q1/SYNCRIP. Mechanistically, induces ubiquitination and degradation of SYNCRIP through the ubiquitin-proteasome pathway by recruiting KLHL3/CUL3 ubiquitin ligase complex. Disrupts host TP53 signaling pathway during viral infection by interacting with host USP7 and thereby decreasing the availability of USP7 for deubiquitinating and stabilizing TP53. Plays a role in the global inhibition of protein ISGylation by interacting with host HERC5 leading to its inhibition. Promotes its own propionylation by blocking SIRT6 interaction with ubiquitin-specific peptidase 10/USP10 leading to SIRT6 degradation via a ubiquitin-proteasome pathway. In turn, propionylation is required to block IRF3-CBP/p300 recruitment and to repress the STING DNA sensing pathway. Plays a role in the activation of mitophagy during infection via interaction with the host proteins NIX/BNIP3L, TUFM and GABARAPL1 thereby inhibiting antiviral responses and contributing to productive replication. This Homo sapiens (Human) protein is VIRF-1 (vIRF-1).